The primary structure comprises 107 residues: Nucleoid-associated protein PPA0205 (107 aa).

It belongs to the YbaB/EbfC family. In terms of assembly, homodimer.

The protein resides in the cytoplasm. It localises to the nucleoid. Binds to DNA and alters its conformation. May be involved in regulation of gene expression, nucleoid organization and DNA protection. This is Nucleoid-associated protein PPA0205 from Cutibacterium acnes (strain DSM 16379 / KPA171202) (Propionibacterium acnes).